The sequence spans 378 residues: tRNA-specific 2-thiouridylase MnmA (378 aa).

ATP-binding positions include 9–16 (GVSGGVDS) and M35. Positions 94–96 (NPD) are interaction with target base in tRNA. Residue C99 is the Nucleophile of the active site. Residues C99 and C195 are joined by a disulfide bond. G123 provides a ligand contact to ATP. Residues 145-147 (KDQ) form an interaction with tRNA region. C195 (cysteine persulfide intermediate) is an active-site residue. The segment at 307-308 (RY) is interaction with tRNA.

This sequence belongs to the MnmA/TRMU family.

The protein localises to the cytoplasm. It catalyses the reaction S-sulfanyl-L-cysteinyl-[protein] + uridine(34) in tRNA + AH2 + ATP = 2-thiouridine(34) in tRNA + L-cysteinyl-[protein] + A + AMP + diphosphate + H(+). In terms of biological role, catalyzes the 2-thiolation of uridine at the wobble position (U34) of tRNA, leading to the formation of s(2)U34. The chain is tRNA-specific 2-thiouridylase MnmA from Xanthomonas oryzae pv. oryzae (strain PXO99A).